A 540-amino-acid chain; its full sequence is Zona pellucida sperm-binding protein 4 (540 aa).

The signal sequence occupies residues 1–18 (MWLLRCVLLCVSLSLAVS). At 19–505 (GQHKPEAPDY…EKLRVPVDSK (487 aa)) the chain is on the extracellular side. Asparagine 69 is a glycosylation site (N-linked (GlcNAc...) asparagine). Positions 141–183 (DWCDSIPARDRLPCAPSPISRGDCEGLGCCYSSEEVNSCYYGN) constitute a P-type domain. One can recognise a ZP domain in the interval 188 to 466 (HCTREGHFSI…VTCPDLSRRR (279 aa)). Residues asparagine 202, asparagine 219, and asparagine 267 are each glycosylated (N-linked (GlcNAc...) asparagine). Threonine 302 is a glycosylation site (O-linked (GalNAc...) threonine). A disulfide bond links cysteine 367 and cysteine 442. Residues 463 to 540 (SRRRNFDNSS…QKSCPDQMCQ (78 aa)) constitute a propeptide, removed in mature form. N-linked (GlcNAc...) asparagine glycans are attached at residues asparagine 470 and asparagine 474. The chain crosses the membrane as a helical span at residues 506–526 (VLWVAGLSGTLILGALLVSYL). Topologically, residues 527-540 (AVKKQKSCPDQMCQ) are cytoplasmic.

Belongs to the ZP domain family. ZPB subfamily. In terms of processing, proteolytically cleaved before the transmembrane segment to yield the secreted ectodomain incorporated in the zona pellucida. Expressed in oocytes.

Its subcellular location is the zona pellucida. The protein resides in the cell membrane. Its function is as follows. Component of the zona pellucida, an extracellular matrix surrounding oocytes which mediates sperm binding, induction of the acrosome reaction and prevents post-fertilization polyspermy. The zona pellucida is composed of 3 to 4 glycoproteins, ZP1, ZP2, ZP3, and ZP4. ZP4 may act as a sperm receptor. The sequence is that of Zona pellucida sperm-binding protein 4 (ZP4) from Homo sapiens (Human).